The sequence spans 363 residues: Peptide chain release factor 1 (363 aa).

Glutamine 237 carries the post-translational modification N5-methylglutamine. The span at 284–296 shows a compositional bias: basic and acidic residues; that stretch reads EDEKRRSAEESTR. The tract at residues 284–306 is disordered; that stretch reads EDEKRRSAEESTRRSLVASGDRS.

Belongs to the prokaryotic/mitochondrial release factor family. Methylated by PrmC. Methylation increases the termination efficiency of RF1.

The protein resides in the cytoplasm. Its function is as follows. Peptide chain release factor 1 directs the termination of translation in response to the peptide chain termination codons UAG and UAA. This chain is Peptide chain release factor 1, found in Shewanella putrefaciens (strain CN-32 / ATCC BAA-453).